The chain runs to 207 residues: Cytochrome c biogenesis ATP-binding export protein CcmA (207 aa).

The ABC transporter domain occupies 6–207; the sequence is LCAEGLECIR…RGDCRSLNLS (202 aa). An ATP-binding site is contributed by 38–45; it reads GANGAGKT.

It belongs to the ABC transporter superfamily. CcmA exporter (TC 3.A.1.107) family. The complex is composed of two ATP-binding proteins (CcmA) and two transmembrane proteins (CcmB).

It is found in the cell inner membrane. It carries out the reaction heme b(in) + ATP + H2O = heme b(out) + ADP + phosphate + H(+). Part of the ABC transporter complex CcmAB involved in the biogenesis of c-type cytochromes; once thought to export heme, this seems not to be the case, but its exact role is uncertain. Responsible for energy coupling to the transport system. This Methylococcus capsulatus (strain ATCC 33009 / NCIMB 11132 / Bath) protein is Cytochrome c biogenesis ATP-binding export protein CcmA.